The sequence spans 356 residues: uncharacterized protein (356 aa).

The signal sequence occupies residues 1–21; it reads MKLITAPCRALLALPFCYAFS.

This is an uncharacterized protein from Escherichia coli (strain K12).